A 256-amino-acid polypeptide reads, in one-letter code: Ribosomal RNA small subunit methyltransferase J (256 aa).

S-adenosyl-L-methionine contacts are provided by residues 104 to 105 (RD), 120 to 121 (ER), 156 to 157 (SS), and Asp174.

This sequence belongs to the methyltransferase superfamily. RsmJ family.

Its subcellular location is the cytoplasm. It carries out the reaction guanosine(1516) in 16S rRNA + S-adenosyl-L-methionine = N(2)-methylguanosine(1516) in 16S rRNA + S-adenosyl-L-homocysteine + H(+). In terms of biological role, specifically methylates the guanosine in position 1516 of 16S rRNA. The chain is Ribosomal RNA small subunit methyltransferase J from Yersinia pseudotuberculosis serotype O:3 (strain YPIII).